Here is a 471-residue protein sequence, read N- to C-terminus: Thymidine phosphorylase (471 aa).

Over residues Met1–Ser10 the composition is skewed to pro residues. The tract at residues Met1–Gln21 is disordered. A Phosphothreonine modification is found at Thr6. Substrate contacts are provided by His102, Arg188, Ser203, and Lys207.

It belongs to the thymidine/pyrimidine-nucleoside phosphorylase family. In terms of assembly, homodimer.

The catalysed reaction is thymidine + phosphate = 2-deoxy-alpha-D-ribose 1-phosphate + thymine. The protein operates within pyrimidine metabolism; dTMP biosynthesis via salvage pathway; dTMP from thymine: step 1/2. Its function is as follows. Catalyzes the reversible phosphorolysis of thymidine. The produced molecules are then utilized as carbon and energy sources or in the rescue of pyrimidine bases for nucleotide synthesis. This is Thymidine phosphorylase (Tymp) from Mus musculus (Mouse).